We begin with the raw amino-acid sequence, 210 residues long: Calcium-activated potassium channel subunit beta-4 (210 aa).

At 1–19 (MAKLRVAYEYTEAEDKSIR) the chain is on the cytoplasmic side. Residues 20 to 40 (LGLFLIISGVVSLFIFGFCWL) traverse the membrane as a helical segment. Residues 41–167 (SPALQDLQAT…DVLLHRTHDE (127 aa)) lie on the Extracellular side of the membrane. N-linked (GlcNAc...) asparagine glycosylation is found at Asn53 and Asn90. A helical transmembrane segment spans residues 168–188 (IVLLHCFLWPLVTFVVGVLIV). At 189–210 (VLTICAKSLAVKAEAMKKRKFS) the chain is on the cytoplasmic side.

It belongs to the KCNMB (TC 8.A.14.1) family. KCNMB4 subfamily. As to quaternary structure, interacts with KCNMA1 tetramer. There are probably 4 molecules of KCMNB4 per KCNMA1 tetramer. Interacts with FMR1 (via N-terminus). Phosphorylated. Phosphorylation modulates its effect on KCNMA1 activation kinetics. In terms of processing, N-glycosylated. A highly glycosylated form is promoted by KCNMA1. Glycosylation, which is not required for the interaction with KCNMA1 and subcellular location, increases protection against charybdotoxin. Predominantly expressed in brain. In brain, it is expressed in the cerebellum, cerebral cortex, medulla, spinal cord, occipital pole, frontal lobe, temporal lobe, putamen, amygdala, caudate nucleus, corpus callosum, hippocampus, substantia nigra and thalamus. Weakly or not expressed in other tissues.

The protein localises to the membrane. Regulatory subunit of the calcium activated potassium KCNMA1 (maxiK) channel. Modulates the calcium sensitivity and gating kinetics of KCNMA1, thereby contributing to KCNMA1 channel diversity. Decreases the gating kinetics and calcium sensitivity of the KCNMA1 channel, but with fast deactivation kinetics. May decrease KCNMA1 channel openings at low calcium concentrations but increases channel openings at high calcium concentrations. Makes KCNMA1 channel resistant to 100 nM charybdotoxin (CTX) toxin concentrations. In Homo sapiens (Human), this protein is Calcium-activated potassium channel subunit beta-4 (KCNMB4).